A 288-amino-acid polypeptide reads, in one-letter code: tRNA pseudouridine synthase A (288 aa).

The Nucleophile role is filled by Asp58. Residue Tyr124 participates in substrate binding.

It belongs to the tRNA pseudouridine synthase TruA family. Homodimer.

The catalysed reaction is uridine(38/39/40) in tRNA = pseudouridine(38/39/40) in tRNA. Formation of pseudouridine at positions 38, 39 and 40 in the anticodon stem and loop of transfer RNAs. This is tRNA pseudouridine synthase A from Corynebacterium diphtheriae (strain ATCC 700971 / NCTC 13129 / Biotype gravis).